Here is a 218-residue protein sequence, read N- to C-terminus: MNQDQMKKAAAEAAIEYVESGMIVGVGTGSTANHFIDLLAAIKDRIDGTVASSEASAQRLRGHGIQVMDLNTAGQLPLYVDGADESNAELHLIKGGGGALTREKIVAAASDKFVCIADESKLVDVLGAFPLPVEVIPMARAYVARELTKLGGQPVLREGFTTDNGNVILDVHNLQISDPVAMEDHINQLPGVVTVGIFAQRPADVLILGSAGGIRKIG.

Residues 28–31 (TGST), 81–84 (DGAD), and 94–97 (KGGG) each bind substrate. Glutamate 103 (proton acceptor) is an active-site residue. Substrate is bound at residue lysine 121.

It belongs to the ribose 5-phosphate isomerase family. Homodimer.

The enzyme catalyses aldehydo-D-ribose 5-phosphate = D-ribulose 5-phosphate. The protein operates within carbohydrate degradation; pentose phosphate pathway; D-ribose 5-phosphate from D-ribulose 5-phosphate (non-oxidative stage): step 1/1. Catalyzes the reversible conversion of ribose-5-phosphate to ribulose 5-phosphate. The chain is Ribose-5-phosphate isomerase A from Thioalkalivibrio sulfidiphilus (strain HL-EbGR7).